A 464-amino-acid chain; its full sequence is Glutamate--tRNA ligase (464 aa).

Positions 10-20 (PSPTGHLHLGG) match the 'HIGH' region motif. Cysteine 99, cysteine 101, cysteine 126, and glutamate 128 together coordinate Zn(2+). The 'KMSKS' region motif lies at 236-240 (KLSKR). Residue lysine 239 participates in ATP binding.

It belongs to the class-I aminoacyl-tRNA synthetase family. Glutamate--tRNA ligase type 1 subfamily. Monomer. Requires Zn(2+) as cofactor.

It localises to the cytoplasm. The catalysed reaction is tRNA(Glu) + L-glutamate + ATP = L-glutamyl-tRNA(Glu) + AMP + diphosphate. Its function is as follows. Catalyzes the attachment of glutamate to tRNA(Glu) in a two-step reaction: glutamate is first activated by ATP to form Glu-AMP and then transferred to the acceptor end of tRNA(Glu). This Oleidesulfovibrio alaskensis (strain ATCC BAA-1058 / DSM 17464 / G20) (Desulfovibrio alaskensis) protein is Glutamate--tRNA ligase.